The primary structure comprises 113 residues: Large ribosomal subunit protein bL20c (113 aa).

Belongs to the bacterial ribosomal protein bL20 family.

Its subcellular location is the plastid. The protein resides in the chloroplast. Functionally, binds directly to 23S ribosomal RNA and is necessary for the in vitro assembly process of the 50S ribosomal subunit. It is not involved in the protein synthesizing functions of that subunit. The polypeptide is Large ribosomal subunit protein bL20c (Staurastrum punctulatum (Green alga)).